Reading from the N-terminus, the 555-residue chain is Ribonuclease J2 (555 aa).

The Zn(2+) site is built by His74, His76, His142, and Asp164. 364–368 (HVSGH) is a binding site for substrate.

Belongs to the metallo-beta-lactamase superfamily. RNA-metabolizing metallo-beta-lactamase-like family. Bacterial RNase J subfamily. Unclear whether it forms homodimers or belongs to a larger complex. According to probably does not form homodimers, while shows homodimer formation. Both reports show RNase J1 and J2 interaction, probably as a heterotetramer shows it is a component of a possible RNA degradosome complex composed of rny, rnjA, rnjB, pnp, pfkA and eno, while finds no evidence of an RNA degradosome complex. The cofactor is Zn(2+).

It localises to the cytoplasm. Its function is as follows. Endonucleolytically cleaves the 5'-leader sequence of certain mRNAs. Endonuclease digestion by the RNase J1/J2 complex occurs at a different site and in some cases more efficiently than J1 or J2 alone. The exonuclease activity of the J1/J2 complex is highly processive on substrates longer than 5 nucleotides, on shorter substrates is distributive. Plays a role in mRNA maturation and stability. Appears to have a limited effect on 16S rRNA maturation, despite its similarity to RNase J1. This subunit alone has very poor 5'-3' exonuclease activity. This chain is Ribonuclease J2, found in Bacillus subtilis (strain 168).